The chain runs to 1298 residues: DNA repair protein rad-50 (1298 aa).

Residues Arg13, Asn38, Gly39, Gly41, Lys42, Thr43, Thr44, Ile66, and Gln158 each coordinate ATP. A Mg(2+)-binding site is contributed by Thr43. Gln158 is a Mg(2+) binding site. Coiled coils occupy residues 222-291 (ARQN…IRVE), 317-598 (EERA…QYRK), and 622-660 (AEEV…IEES). The region spanning 622–719 (AEEVSEKLEN…EEIIIVKAEG (98 aa)) is the Zinc-hook domain. Residues Cys666 and Cys669 each contribute to the Zn(2+) site. 2 coiled-coil regions span residues 691-719 (LSFP…KAEG) and 754-1092 (KNEK…KESI).

Belongs to the SMC family. RAD50 subfamily. Component of the MRN complex composed of two heterodimers rad-50 and mre-11 associated with a single nbs-1. The cofactor is Zn(2+).

The protein localises to the nucleus. It localises to the chromosome. It carries out the reaction ATP + H2O = ADP + phosphate + H(+). In terms of biological role, component of the MRN complex, which plays a central role in double-strand break (DSB) repair, DNA recombination, maintenance of telomere integrity and meiosis. The MRN complex is involved in the repair of DNA double-strand breaks (DSBs) via homologous recombination (HR), an error-free mechanism which primarily occurs during S and G2 phases. The complex (1) mediates the end resection of damaged DNA, which generates proper single-stranded DNA, a key initial steps in HR, and is (2) required for the recruitment of other repair factors and efficient activation of ATM and ATR upon DNA damage. The MRN complex possesses single-strand endonuclease activity and double-strand-specific 3'-5' exonuclease activity, which are provided by mre-11, to initiate end resection, which is required for single-strand invasion and recombination. Within the complex, rad-50 is both required to bind DNA ends and hold them in close proximity and regulate the activity of mre-11. Rad-50 provides an ATP-dependent control of mre-11 by positioning DNA ends into the mre-11 active site: ATP-binding induces a large structural change from an open form with accessible mre-11 nuclease sites into a closed form. This is DNA repair protein rad-50 (rad-50) from Caenorhabditis elegans.